Consider the following 62-residue polypeptide: DNA-directed RNA polymerase subunit omega (62 aa).

The protein belongs to the RNA polymerase subunit omega family. The RNAP catalytic core consists of 2 alpha, 1 beta, 1 beta' and 1 omega subunit. When a sigma factor is associated with the core the holoenzyme is formed, which can initiate transcription.

It catalyses the reaction RNA(n) + a ribonucleoside 5'-triphosphate = RNA(n+1) + diphosphate. In terms of biological role, promotes RNA polymerase assembly. Latches the N- and C-terminal regions of the beta' subunit thereby facilitating its interaction with the beta and alpha subunits. This is DNA-directed RNA polymerase subunit omega from Wigglesworthia glossinidia brevipalpis.